Reading from the N-terminus, the 174-residue chain is Small ribosomal subunit protein bS16 (174 aa).

The disordered stretch occupies residues 81-174; the sequence is QRFTGEPAPP…DATTDATPSA (94 aa). Pro residues predominate over residues 87–97; it reads PAPPPMKTAPP. Over residues 98–118 the composition is skewed to basic and acidic residues; sequence KPDKKALFEAAAKEAAGEPRA. The segment covering 135–158 has biased composition (low complexity); sequence ETTPAAEAAPDAAASADEPAGGAS. Residues 160-174 show a composition bias toward polar residues; sequence AAESQDATTDATPSA.

Belongs to the bacterial ribosomal protein bS16 family.

The chain is Small ribosomal subunit protein bS16 from Acidothermus cellulolyticus (strain ATCC 43068 / DSM 8971 / 11B).